Consider the following 490-residue polypeptide: Chromosomal replication initiator protein DnaA (490 aa).

The interval 1 to 75 (MAVSSDAEQK…SELWKQEDAD (75 aa)) is domain I, interacts with DnaA modulators. Residues 75–145 (DLLKIEIVVR…SEFRHNVLGS (71 aa)) form a domain II region. Positions 146-368 (PLDPRYTFGS…GAFNQLLFRQ (223 aa)) are domain III, AAA+ region. 4 residues coordinate ATP: Gly192, Gly194, Lys195, and Thr196. The tract at residues 369-490 (SFEPQITIDR…LLRRLINDQA (122 aa)) is domain IV, binds dsDNA.

Belongs to the DnaA family. Oligomerizes as a right-handed, spiral filament on DNA at oriC.

Its subcellular location is the cytoplasm. Functionally, plays an essential role in the initiation and regulation of chromosomal replication. ATP-DnaA binds to the origin of replication (oriC) to initiate formation of the DNA replication initiation complex once per cell cycle. Binds the DnaA box (a 9 base pair repeat at the origin) and separates the double-stranded (ds)DNA. Forms a right-handed helical filament on oriC DNA; dsDNA binds to the exterior of the filament while single-stranded (ss)DNA is stabiized in the filament's interior. The ATP-DnaA-oriC complex binds and stabilizes one strand of the AT-rich DNA unwinding element (DUE), permitting loading of DNA polymerase. After initiation quickly degrades to an ADP-DnaA complex that is not apt for DNA replication. Binds acidic phospholipids. The chain is Chromosomal replication initiator protein DnaA from Mesorhizobium japonicum (strain LMG 29417 / CECT 9101 / MAFF 303099) (Mesorhizobium loti (strain MAFF 303099)).